Consider the following 752-residue polypeptide: Kaurene synthase like 2, chloroplastic (752 aa).

Residues 1–28 (MSLLLSNSALVGPKFRSSRISHASASLD) constitute a chloroplast transit peptide. The Mg(2+) site is built by Asp-538, Asp-542, Asn-682, and Glu-690. Residues 538 to 542 (DDLFD) carry the DDXXD motif motif.

It belongs to the terpene synthase family. Mg(2+) serves as cofactor. In terms of tissue distribution, highly expressed in leaves.

The protein resides in the plastid. Its subcellular location is the chloroplast. The protein operates within secondary metabolite biosynthesis; terpenoid biosynthesis. Its function is as follows. Involved in the biosynthesis of ent-kaurene diterpenoids natural products such as oridonin, miltiradiene, eriocalyxin B and nezukol, known to exhibit antitumor, anti-inflammatory and antibacterial activities. Catalyzes the conversion of ent-copalyl diphosphate (ent-CPP) to ent-isopimaradiene like compounds. In Isodon rubescens (Rabdosia rubescens), this protein is Kaurene synthase like 2, chloroplastic.